We begin with the raw amino-acid sequence, 466 residues long: Soluble pyridine nucleotide transhydrogenase (466 aa).

36-45 (ERYQNVGGGC) is an FAD binding site.

This sequence belongs to the class-I pyridine nucleotide-disulfide oxidoreductase family. Requires FAD as cofactor.

Its subcellular location is the cytoplasm. The catalysed reaction is NAD(+) + NADPH = NADH + NADP(+). Conversion of NADPH, generated by peripheral catabolic pathways, to NADH, which can enter the respiratory chain for energy generation. The sequence is that of Soluble pyridine nucleotide transhydrogenase from Escherichia coli O9:H4 (strain HS).